We begin with the raw amino-acid sequence, 422 residues long: Histidinol dehydrogenase (422 aa).

NAD(+) is bound by residues Y123, Q183, and N206. Substrate-binding residues include S229, Q251, and H254. Zn(2+)-binding residues include Q251 and H254. Catalysis depends on proton acceptor residues E320 and H321. Substrate-binding residues include H321, D354, E408, and H413. Zn(2+) is bound at residue D354. H413 contacts Zn(2+).

This sequence belongs to the histidinol dehydrogenase family. Zn(2+) is required as a cofactor.

It catalyses the reaction L-histidinol + 2 NAD(+) + H2O = L-histidine + 2 NADH + 3 H(+). It participates in amino-acid biosynthesis; L-histidine biosynthesis; L-histidine from 5-phospho-alpha-D-ribose 1-diphosphate: step 9/9. Its function is as follows. Catalyzes the sequential NAD-dependent oxidations of L-histidinol to L-histidinaldehyde and then to L-histidine. The protein is Histidinol dehydrogenase of Natronomonas pharaonis (strain ATCC 35678 / DSM 2160 / CIP 103997 / JCM 8858 / NBRC 14720 / NCIMB 2260 / Gabara) (Halobacterium pharaonis).